Here is a 118-residue protein sequence, read N- to C-terminus: UPF0102 protein RSal33209_1090 (118 aa).

Belongs to the UPF0102 family.

In Renibacterium salmoninarum (strain ATCC 33209 / DSM 20767 / JCM 11484 / NBRC 15589 / NCIMB 2235), this protein is UPF0102 protein RSal33209_1090.